A 75-amino-acid polypeptide reads, in one-letter code: Small ribosomal subunit protein eS17 (75 aa).

This sequence belongs to the eukaryotic ribosomal protein eS17 family.

In Thermoplasma acidophilum (strain ATCC 25905 / DSM 1728 / JCM 9062 / NBRC 15155 / AMRC-C165), this protein is Small ribosomal subunit protein eS17.